Reading from the N-terminus, the 167-residue chain is Putative ripening-related protein 6 (167 aa).

The signal sequence occupies residues 1-23 (MANAKQLALFAMLVLLLASCAAA). Residues 28 to 57 (KPDPCDGGGGGVDSHLPPGMRRCSSPAVSE) are disordered.

Belongs to the kiwellin family.

Its subcellular location is the secreted. This is Putative ripening-related protein 6 from Oryza sativa subsp. japonica (Rice).